Reading from the N-terminus, the 297-residue chain is Adrenocorticotropic hormone receptor (297 aa).

Topologically, residues 1 to 23 are extracellular; that stretch reads MKHIINSYENINNTARNNSDCPR. 2 N-linked (GlcNAc...) asparagine glycosylation sites follow: Asn-12 and Asn-17. 2 disulfide bridges follow: Cys-21/Cys-253 and Cys-245/Cys-251. A helical transmembrane segment spans residues 24-49; sequence VVLPEEIFFTISIVGVLENLIVLLAV. Residues 50–58 are Cytoplasmic-facing; it reads FKNKNLQAP. Residues 59–79 form a helical membrane-spanning segment; sequence MYFFICSLAISDMLGSLYKIL. Residues 80–104 lie on the Extracellular side of the membrane; it reads ENILIILRNMGYLKPRGSFETTADD. Residues 105 to 126 traverse the membrane as a helical segment; that stretch reads IIDSLFVLSLLGSIFSLSVIAA. The Cytoplasmic segment spans residues 127 to 147; it reads DRYITIFHALRYHSIVTMRRT. Residues 148–168 traverse the membrane as a helical segment; that stretch reads VVVLTVIWTFCTGTGITMVIF. At 169 to 180 the chain is on the extracellular side; that stretch reads SHHVPTVITFTS. The helical transmembrane segment at 181 to 199 threads the bilayer; the sequence is LFPLMLVFILCLYVHMFLL. At 200–217 the chain is on the cytoplasmic side; it reads ARSHTRKISTLPRANMKG. A helical membrane pass occupies residues 218-244; that stretch reads AITLTILLGVFIFCWAPFVLHVLLMTF. The Extracellular segment spans residues 245–256; the sequence is CPSNPYCACYMS. A helical transmembrane segment spans residues 257–278; the sequence is LFQVNGMLIMCNAVIDPFIYAF. The Cytoplasmic segment spans residues 279 to 297; it reads RSPELRDAFKKMIFCSRYW. A lipid anchor (S-palmitoyl cysteine) is attached at Cys-293.

The protein belongs to the G-protein coupled receptor 1 family. Homodimer. Interacts with corticotropin (ACTH). Interacts with MRAP; this interaction targets MC2R to the plasma membrane. Interacts with MRAP2; competing with MRAP for binding to MC2R and impairing the binding of corticotropin (ACTH). Ubiquitinated by MGRN1 that may be involved in post-endocytic trafficking and/or degradation of internalized receptor. As to expression, melanocytes and corticoadrenal tissue.

Its subcellular location is the cell membrane. Its function is as follows. Hormone receptor primarily expressed in adrenal cortex that plays a key role in regulating adrenocortical function. Upon corticotropin (ACTH) binding, facilitates the release of adrenal glucocorticoids, including cortisol and corticosterone. In addition, MC2R is required for fetal and neonatal adrenal gland development. Mechanistically, activates adenylate cyclase (cAMP), the MAPK cascade as well as the cAMP-dependent protein kinase A pathway leading to steroidogenic factor 1/NR5A1-mediated transcriptional activation. This Homo sapiens (Human) protein is Adrenocorticotropic hormone receptor (MC2R).